Reading from the N-terminus, the 365-residue chain is tRNA N6-adenosine threonylcarbamoyltransferase (365 aa).

Histidine 119 and histidine 123 together coordinate Fe cation. Substrate-binding positions include 141–145, aspartate 174, glycine 187, and asparagine 288; that span reads LVSGG. Aspartate 316 is a Fe cation binding site.

Belongs to the KAE1 / TsaD family. It depends on Fe(2+) as a cofactor.

The protein localises to the cytoplasm. It carries out the reaction L-threonylcarbamoyladenylate + adenosine(37) in tRNA = N(6)-L-threonylcarbamoyladenosine(37) in tRNA + AMP + H(+). In terms of biological role, required for the formation of a threonylcarbamoyl group on adenosine at position 37 (t(6)A37) in tRNAs that read codons beginning with adenine. Is involved in the transfer of the threonylcarbamoyl moiety of threonylcarbamoyl-AMP (TC-AMP) to the N6 group of A37, together with TsaE and TsaB. TsaD likely plays a direct catalytic role in this reaction. The protein is tRNA N6-adenosine threonylcarbamoyltransferase of Rhizobium etli (strain ATCC 51251 / DSM 11541 / JCM 21823 / NBRC 15573 / CFN 42).